A 91-amino-acid chain; its full sequence is UPF0358 protein Sca_0738 (91 aa).

The protein belongs to the UPF0358 family.

This Staphylococcus carnosus (strain TM300) protein is UPF0358 protein Sca_0738.